A 321-amino-acid polypeptide reads, in one-letter code: Peroxidase 4 (321 aa).

Positions 1–25 (MASSSFSIVVVALGVLALFAGSSSA) are cleaved as a signal peptide. Position 26 is a pyrrolidone carboxylic acid (glutamine 26). 4 disulfides stabilise this stretch: cysteine 36–cysteine 116, cysteine 69–cysteine 74, cysteine 122–cysteine 317, and cysteine 201–cysteine 226. The active-site Proton acceptor is the histidine 67. Residues aspartate 68, valine 71, glycine 73, aspartate 75, and serine 77 each coordinate Ca(2+). Position 164 (proline 164) interacts with substrate. Histidine 194 serves as a coordination point for heme b. Threonine 195 is a Ca(2+) binding site. Asparagine 210 carries an N-linked (GlcNAc...) asparagine glycan. 3 residues coordinate Ca(2+): aspartate 241, threonine 244, and aspartate 249.

It belongs to the peroxidase family. Classical plant (class III) peroxidase subfamily. It depends on heme b as a cofactor. Ca(2+) serves as cofactor.

The protein localises to the secreted. The catalysed reaction is 2 a phenolic donor + H2O2 = 2 a phenolic radical donor + 2 H2O. In terms of biological role, removal of H(2)O(2), oxidation of toxic reductants, biosynthesis and degradation of lignin, suberization, auxin catabolism, response to environmental stresses such as wounding, pathogen attack and oxidative stress. These functions might be dependent on each isozyme/isoform in each plant tissue. The sequence is that of Peroxidase 4 from Vitis vinifera (Grape).